Consider the following 413-residue polypeptide: NAD-dependent dihydropyrimidine dehydrogenase subunit PreT homolog (413 aa).

E287 contacts NAD(+).

The protein belongs to the NADH dehydrogenase family. As to quaternary structure, heterotetramer of 2 PreA and 2 PreT subunits.

It catalyses the reaction 5,6-dihydrouracil + NAD(+) = uracil + NADH + H(+). It carries out the reaction 5,6-dihydrothymine + NAD(+) = thymine + NADH + H(+). In terms of biological role, involved in pyrimidine base degradation. Catalyzes physiologically the reduction of uracil to 5,6-dihydrouracil (DHU) by using NADH as a specific cosubstrate. It also catalyzes the reverse reaction and the reduction of thymine to 5,6-dihydrothymine (DHT). The polypeptide is NAD-dependent dihydropyrimidine dehydrogenase subunit PreT homolog (preT) (Salmonella typhi).